We begin with the raw amino-acid sequence, 689 residues long: MPREFPLERTRNIGIMAHIDAGKTTTTERILFYSGTTRKLGETHEGASQMDWMDQEKERGITITSAATTCQWLNHRVNIIDTPGHVDFTVEVERSLRVLDGAVAVFCAKGGVEPQSETVWRQGDKYKVPRMAFVNKMDRQGADFFNVMQMMIDRLAANPVAVQLPIGSEEEFTGIIDLVKMEATIYLDDVGQETKIVEIPEELKELAVEYREKLVEAVSETSEELMMKYLEGEALTEEELVKGIRQGTINVQITPVYCGSAYKNKGVQLLLDGVVAYMPSPLDIPAISGIDADTQEEIERHADDSEPFSALAFKIMADPYVGKLAFFRVYSGTLDAGSYVLNSTKGKKERIGRILQMHANTRAEIPTVYAGDIAAAVGLKDTTTGDTLCDPTDAVILESMVFPEPVISVAIEPKTKAGQEKMGVALQKLAEEDPTFKTYTDEETSQTIIAGMGELHLEIIVDRMMREFKVEATVGKPQVAYKETITKAVEVEAKYAKQSGGRGQYGHVKIRMIPQEPGIGYEFTNSTVGGSIPREYVPAVDQGIQGAMVNGILAGYEVVDFKVELYDGSYHDVDSSEMAFKIAGSMAFKEGMRKASPALLEPYMKVEVVTPEDYMGDVIGDLNSRRGQIEGMESRSGAQVIKAFVPLSEMFGYSTDLRSKTQGRATYSMHFNHYAQVPASISEKIMTGK.

One can recognise a tr-type G domain in the interval 8–282 (ERTRNIGIMA…GVVAYMPSPL (275 aa)). Residues 17-24 (AHIDAGKT), 81-85 (DTPGH), and 135-138 (NKMD) each bind GTP.

It belongs to the TRAFAC class translation factor GTPase superfamily. Classic translation factor GTPase family. EF-G/EF-2 subfamily.

The protein resides in the cytoplasm. Its function is as follows. Catalyzes the GTP-dependent ribosomal translocation step during translation elongation. During this step, the ribosome changes from the pre-translocational (PRE) to the post-translocational (POST) state as the newly formed A-site-bound peptidyl-tRNA and P-site-bound deacylated tRNA move to the P and E sites, respectively. Catalyzes the coordinated movement of the two tRNA molecules, the mRNA and conformational changes in the ribosome. The polypeptide is Elongation factor G (Alkaliphilus metalliredigens (strain QYMF)).